Consider the following 274-residue polypeptide: Large ribosomal subunit protein uL2 (274 aa).

Residues 223–274 (VAMNPVDHPHGGGEGRTSGGRHPVTPWGVPTKGYKTRSNKRTDKYIVRRRTK) are disordered.

Belongs to the universal ribosomal protein uL2 family. Part of the 50S ribosomal subunit. Forms a bridge to the 30S subunit in the 70S ribosome.

Its function is as follows. One of the primary rRNA binding proteins. Required for association of the 30S and 50S subunits to form the 70S ribosome, for tRNA binding and peptide bond formation. It has been suggested to have peptidyltransferase activity; this is somewhat controversial. Makes several contacts with the 16S rRNA in the 70S ribosome. The sequence is that of Large ribosomal subunit protein uL2 from Shewanella amazonensis (strain ATCC BAA-1098 / SB2B).